We begin with the raw amino-acid sequence, 367 residues long: Peptide chain release factor 1 (367 aa).

Gln243 carries the N5-methylglutamine modification.

Belongs to the prokaryotic/mitochondrial release factor family. Post-translationally, methylated by PrmC. Methylation increases the termination efficiency of RF1.

Its subcellular location is the cytoplasm. In terms of biological role, peptide chain release factor 1 directs the termination of translation in response to the peptide chain termination codons UAG and UAA. The sequence is that of Peptide chain release factor 1 from Acidovorax sp. (strain JS42).